Reading from the N-terminus, the 80-residue chain is Conotoxin PnMKLT1-0121 (80 aa).

The N-terminal stretch at 1 to 22 is a signal peptide; the sequence is MKLTCMMIVAVLFLTAWTFATA. Residues 23 to 49 constitute a propeptide that is removed on maturation; the sequence is DDPRNRLENFFSKTQHEMKNPEASKLN. Intrachain disulfides connect Cys-52-Cys-67, Cys-59-Cys-71, and Cys-66-Cys-75.

It belongs to the conotoxin O1 superfamily. In terms of tissue distribution, expressed by the venom duct.

The protein localises to the secreted. This is Conotoxin PnMKLT1-0121 from Conus pennaceus (Feathered cone).